Here is a 270-residue protein sequence, read N- to C-terminus: Formamidopyrimidine-DNA glycosylase (270 aa).

The Schiff-base intermediate with DNA role is filled by P2. The active-site Proton donor is E3. K57 acts as the Proton donor; for beta-elimination activity in catalysis. Residues H90, R109, and K150 each contribute to the DNA site. The FPG-type zinc finger occupies Q235–K269. Catalysis depends on R259, which acts as the Proton donor; for delta-elimination activity.

It belongs to the FPG family. In terms of assembly, monomer. The cofactor is Zn(2+).

It catalyses the reaction Hydrolysis of DNA containing ring-opened 7-methylguanine residues, releasing 2,6-diamino-4-hydroxy-5-(N-methyl)formamidopyrimidine.. The enzyme catalyses 2'-deoxyribonucleotide-(2'-deoxyribose 5'-phosphate)-2'-deoxyribonucleotide-DNA = a 3'-end 2'-deoxyribonucleotide-(2,3-dehydro-2,3-deoxyribose 5'-phosphate)-DNA + a 5'-end 5'-phospho-2'-deoxyribonucleoside-DNA + H(+). In terms of biological role, involved in base excision repair of DNA damaged by oxidation or by mutagenic agents. Acts as a DNA glycosylase that recognizes and removes damaged bases. Has a preference for oxidized purines, such as 7,8-dihydro-8-oxoguanine (8-oxoG). Has AP (apurinic/apyrimidinic) lyase activity and introduces nicks in the DNA strand. Cleaves the DNA backbone by beta-delta elimination to generate a single-strand break at the site of the removed base with both 3'- and 5'-phosphates. This Actinobacillus succinogenes (strain ATCC 55618 / DSM 22257 / CCUG 43843 / 130Z) protein is Formamidopyrimidine-DNA glycosylase.